The following is a 472-amino-acid chain: Sarcalumenin (472 aa).

An N-terminal signal peptide occupies residues 1-20; the sequence is MKRLNLLCCCVASLLLLGTA. Residue Leu59 is glycosylated (N-linked (GlcNAc...) asparagine). The Dynamin-type G domain maps to 89–330; it reads ITSKPMVLFL…IENRMENKIA (242 aa). Residues 99 to 106 are G1 motif; it reads GPWSVGKS. A G2 motif region spans residues 127–128; the sequence is EP. The interval 189–192 is G3 motif; sequence DTPG. Residues 254-257 form a G4 motif region; that stretch reads NKAD. A region of interest (G5 motif) is located at residue Leu278. N-linked (GlcNAc...) asparagine glycans are attached at residues Asn280 and Asn388.

The protein belongs to the TRAFAC class dynamin-like GTPase superfamily. Dynamin/Fzo/YdjA family. In terms of processing, N-glycosylated.

It localises to the sarcoplasmic reticulum lumen. It is found in the sarcoplasmic reticulum membrane. The protein is Sarcalumenin (SRL) of Gallus gallus (Chicken).